Consider the following 444-residue polypeptide: Tol-Pal system protein TolB (444 aa).

A signal peptide spans 1-19 (MRNIIYFILSLLFSFKGYA).

This sequence belongs to the TolB family. In terms of assembly, the Tol-Pal system is composed of five core proteins: the inner membrane proteins TolA, TolQ and TolR, the periplasmic protein TolB and the outer membrane protein Pal. They form a network linking the inner and outer membranes and the peptidoglycan layer.

It localises to the periplasm. Functionally, part of the Tol-Pal system, which plays a role in outer membrane invagination during cell division and is important for maintaining outer membrane integrity. This chain is Tol-Pal system protein TolB, found in Rickettsia felis (strain ATCC VR-1525 / URRWXCal2) (Rickettsia azadi).